A 331-amino-acid polypeptide reads, in one-letter code: Endo-1,4-beta-xylanase 2 (331 aa).

Residues 1 to 17 (MKASSVLLGLAPLAALA) form the signal peptide. In terms of domain architecture, GH10 spans 31 to 329 (QQSIDALMKA…KPAYNSVVQA (299 aa)). Asparagine 105 carries N-linked (GlcNAc...) asparagine glycosylation. The active-site Proton donor is glutamate 159. The active-site Nucleophile is glutamate 266. Residues cysteine 284 and cysteine 290 are joined by a disulfide bond. A glycan (N-linked (GlcNAc...) asparagine) is linked at asparagine 301.

Belongs to the glycosyl hydrolase 10 (cellulase F) family.

The protein localises to the secreted. It catalyses the reaction Endohydrolysis of (1-&gt;4)-beta-D-xylosidic linkages in xylans.. Its pathway is glycan degradation; xylan degradation. Functionally, endo-1,4-beta-xylanase involved in the hydrolysis of xylan, a major structural heterogeneous polysaccharide found in plant biomass representing the second most abundant polysaccharide in the biosphere, after cellulose. Accounts for approximately 70 percent of the endoxylanase activity in the culture filtrate. In Pyricularia grisea (Crabgrass-specific blast fungus), this protein is Endo-1,4-beta-xylanase 2 (XYL2).